We begin with the raw amino-acid sequence, 224 residues long: Octanoyltransferase (224 aa).

In terms of domain architecture, BPL/LPL catalytic spans 45–223; it reads PSNKQAVWML…SLNKRFGLLW (179 aa). Substrate-binding positions include 87–94, 154–156, and 167–169; these read RGGDVTHH, SIG, and GIA. Cys185 functions as the Acyl-thioester intermediate in the catalytic mechanism.

It belongs to the LipB family.

The protein resides in the cytoplasm. The catalysed reaction is octanoyl-[ACP] + L-lysyl-[protein] = N(6)-octanoyl-L-lysyl-[protein] + holo-[ACP] + H(+). Its pathway is protein modification; protein lipoylation via endogenous pathway; protein N(6)-(lipoyl)lysine from octanoyl-[acyl-carrier-protein]: step 1/2. Its function is as follows. Catalyzes the transfer of endogenously produced octanoic acid from octanoyl-acyl-carrier-protein onto the lipoyl domains of lipoate-dependent enzymes. Lipoyl-ACP can also act as a substrate although octanoyl-ACP is likely to be the physiological substrate. The chain is Octanoyltransferase from Prochlorococcus marinus (strain SARG / CCMP1375 / SS120).